Reading from the N-terminus, the 236-residue chain is Pyridoxal 5'-phosphate synthase subunit PdxT (236 aa).

61 to 63 (GES) provides a ligand contact to L-glutamine. Cys-93 acts as the Nucleophile in catalysis. Residues Arg-127 and 163–164 (IR) contribute to the L-glutamine site. Catalysis depends on charge relay system residues His-215 and Glu-217.

It belongs to the glutaminase PdxT/SNO family. In terms of assembly, in the presence of PdxS, forms a dodecamer of heterodimers. Only shows activity in the heterodimer.

The enzyme catalyses aldehydo-D-ribose 5-phosphate + D-glyceraldehyde 3-phosphate + L-glutamine = pyridoxal 5'-phosphate + L-glutamate + phosphate + 3 H2O + H(+). It carries out the reaction L-glutamine + H2O = L-glutamate + NH4(+). It participates in cofactor biosynthesis; pyridoxal 5'-phosphate biosynthesis. Its function is as follows. Catalyzes the hydrolysis of glutamine to glutamate and ammonia as part of the biosynthesis of pyridoxal 5'-phosphate. The resulting ammonia molecule is channeled to the active site of PdxS. The protein is Pyridoxal 5'-phosphate synthase subunit PdxT of Pseudarthrobacter chlorophenolicus (strain ATCC 700700 / DSM 12829 / CIP 107037 / JCM 12360 / KCTC 9906 / NCIMB 13794 / A6) (Arthrobacter chlorophenolicus).